A 721-amino-acid polypeptide reads, in one-letter code: Polyphosphate kinase (721 aa).

Asn54 is a binding site for ATP. Mg(2+) contacts are provided by Arg379 and Arg409. The PLD phosphodiesterase domain maps to 434-468; that stretch reads THLKTHSKIALVVKRIGGELTSFVHLGTGNYNDKT. His439 (phosphohistidine intermediate) is an active-site residue. Residues Tyr472, Arg568, and His596 each contribute to the ATP site.

The protein belongs to the polyphosphate kinase 1 (PPK1) family. Mg(2+) serves as cofactor. Post-translationally, an intermediate of this reaction is the autophosphorylated ppk in which a phosphate is covalently linked to a histidine residue through a N-P bond.

The enzyme catalyses [phosphate](n) + ATP = [phosphate](n+1) + ADP. Catalyzes the reversible transfer of the terminal phosphate of ATP to form a long-chain polyphosphate (polyP). This Staphylococcus haemolyticus (strain JCSC1435) protein is Polyphosphate kinase.